A 257-amino-acid polypeptide reads, in one-letter code: Indole-3-glycerol phosphate synthase (257 aa).

This sequence belongs to the TrpC family.

It catalyses the reaction 1-(2-carboxyphenylamino)-1-deoxy-D-ribulose 5-phosphate + H(+) = (1S,2R)-1-C-(indol-3-yl)glycerol 3-phosphate + CO2 + H2O. It participates in amino-acid biosynthesis; L-tryptophan biosynthesis; L-tryptophan from chorismate: step 4/5. This is Indole-3-glycerol phosphate synthase from Phenylobacterium zucineum (strain HLK1).